The primary structure comprises 197 residues: Imidazoleglycerol-phosphate dehydratase (197 aa).

Belongs to the imidazoleglycerol-phosphate dehydratase family.

The protein localises to the cytoplasm. It catalyses the reaction D-erythro-1-(imidazol-4-yl)glycerol 3-phosphate = 3-(imidazol-4-yl)-2-oxopropyl phosphate + H2O. Its pathway is amino-acid biosynthesis; L-histidine biosynthesis; L-histidine from 5-phospho-alpha-D-ribose 1-diphosphate: step 6/9. The sequence is that of Imidazoleglycerol-phosphate dehydratase from Cellvibrio japonicus (strain Ueda107) (Pseudomonas fluorescens subsp. cellulosa).